A 163-amino-acid polypeptide reads, in one-letter code: Phosphopantetheine adenylyltransferase (163 aa).

Residue S11 participates in substrate binding. ATP contacts are provided by residues 11–12 (SF) and H19. 3 residues coordinate substrate: K43, L75, and R89. ATP-binding positions include 90 to 92 (GLR), E100, and 125 to 131 (FGYLSSS).

This sequence belongs to the bacterial CoaD family. In terms of assembly, homohexamer. Mg(2+) is required as a cofactor.

It localises to the cytoplasm. The catalysed reaction is (R)-4'-phosphopantetheine + ATP + H(+) = 3'-dephospho-CoA + diphosphate. It functions in the pathway cofactor biosynthesis; coenzyme A biosynthesis; CoA from (R)-pantothenate: step 4/5. Its function is as follows. Reversibly transfers an adenylyl group from ATP to 4'-phosphopantetheine, yielding dephospho-CoA (dPCoA) and pyrophosphate. The chain is Phosphopantetheine adenylyltransferase from Geobacter metallireducens (strain ATCC 53774 / DSM 7210 / GS-15).